The following is a 179-amino-acid chain: Inner membrane-spanning protein YciB (179 aa).

6 helical membrane passes run 3-23, 24-44, 49-69, 76-96, 121-141, and 149-169; these read FLFDLFPVILFFAAFKLADIY, TATAVAIGATVLQIGWVWFRH, PMQWVSLLIIAVFGGATLVLH, WKPTVLYWLFAAALLGSVLVW, LAWAGFFAAMGVLNLYVAYQF, and FKLFGSMGLMLVFIVAQSVWL.

Belongs to the YciB family.

Its subcellular location is the cell inner membrane. Its function is as follows. Plays a role in cell envelope biogenesis, maintenance of cell envelope integrity and membrane homeostasis. This is Inner membrane-spanning protein YciB from Cupriavidus taiwanensis (strain DSM 17343 / BCRC 17206 / CCUG 44338 / CIP 107171 / LMG 19424 / R1) (Ralstonia taiwanensis (strain LMG 19424)).